Consider the following 219-residue polypeptide: Cytidylate kinase (219 aa).

15 to 23 contacts ATP; sequence GPAASGKGT.

It belongs to the cytidylate kinase family. Type 1 subfamily.

Its subcellular location is the cytoplasm. It catalyses the reaction CMP + ATP = CDP + ADP. The catalysed reaction is dCMP + ATP = dCDP + ADP. This is Cytidylate kinase from Brucella melitensis biotype 2 (strain ATCC 23457).